A 444-amino-acid chain; its full sequence is Methylenetetrahydrofolate--tRNA-(uracil-5-)-methyltransferase TrmFO (444 aa).

Residue 9-14 coordinates FAD; that stretch reads GAGMAG.

Belongs to the MnmG family. TrmFO subfamily. The cofactor is FAD.

The protein localises to the cytoplasm. The enzyme catalyses uridine(54) in tRNA + (6R)-5,10-methylene-5,6,7,8-tetrahydrofolate + NADH + H(+) = 5-methyluridine(54) in tRNA + (6S)-5,6,7,8-tetrahydrofolate + NAD(+). It catalyses the reaction uridine(54) in tRNA + (6R)-5,10-methylene-5,6,7,8-tetrahydrofolate + NADPH + H(+) = 5-methyluridine(54) in tRNA + (6S)-5,6,7,8-tetrahydrofolate + NADP(+). Catalyzes the folate-dependent formation of 5-methyl-uridine at position 54 (M-5-U54) in all tRNAs. In Cereibacter sphaeroides (strain ATCC 17023 / DSM 158 / JCM 6121 / CCUG 31486 / LMG 2827 / NBRC 12203 / NCIMB 8253 / ATH 2.4.1.) (Rhodobacter sphaeroides), this protein is Methylenetetrahydrofolate--tRNA-(uracil-5-)-methyltransferase TrmFO.